Reading from the N-terminus, the 366-residue chain is Chorismate synthase (366 aa).

NADP(+) is bound by residues R48 and R54. Residues 125–127 (RSS), 238–239 (NA), G278, 293–297 (KPTSS), and R319 contribute to the FMN site.

The protein belongs to the chorismate synthase family. As to quaternary structure, homotetramer. The cofactor is FMNH2.

The catalysed reaction is 5-O-(1-carboxyvinyl)-3-phosphoshikimate = chorismate + phosphate. Its pathway is metabolic intermediate biosynthesis; chorismate biosynthesis; chorismate from D-erythrose 4-phosphate and phosphoenolpyruvate: step 7/7. Functionally, catalyzes the anti-1,4-elimination of the C-3 phosphate and the C-6 proR hydrogen from 5-enolpyruvylshikimate-3-phosphate (EPSP) to yield chorismate, which is the branch point compound that serves as the starting substrate for the three terminal pathways of aromatic amino acid biosynthesis. This reaction introduces a second double bond into the aromatic ring system. The sequence is that of Chorismate synthase from Burkholderia cenocepacia (strain HI2424).